Consider the following 46-residue polypeptide: Large ribosomal subunit protein bL36A (46 aa).

It belongs to the bacterial ribosomal protein bL36 family.

The chain is Large ribosomal subunit protein bL36A from Sodalis glossinidius (strain morsitans).